The primary structure comprises 392 residues: Putative nickel insertion protein (392 aa).

It belongs to the LarC family.

This Pelobacter propionicus (strain DSM 2379 / NBRC 103807 / OttBd1) protein is Putative nickel insertion protein.